A 459-amino-acid polypeptide reads, in one-letter code: tRNA modification GTPase MnmE (459 aa).

Arginine 23, glutamate 88, and arginine 127 together coordinate (6S)-5-formyl-5,6,7,8-tetrahydrofolate. The TrmE-type G domain occupies 223–381 (GLNTVIIGKP…LKDTIENMFA (159 aa)). Position 233 (asparagine 233) interacts with K(+). GTP contacts are provided by residues 233-238 (NVGKSS), 252-258 (TDIPGTT), and 277-280 (DTAG). Serine 237 serves as a coordination point for Mg(2+). The K(+) site is built by threonine 252, isoleucine 254, and threonine 257. Residue threonine 258 coordinates Mg(2+). Lysine 459 lines the (6S)-5-formyl-5,6,7,8-tetrahydrofolate pocket.

The protein belongs to the TRAFAC class TrmE-Era-EngA-EngB-Septin-like GTPase superfamily. TrmE GTPase family. In terms of assembly, homodimer. Heterotetramer of two MnmE and two MnmG subunits. K(+) is required as a cofactor.

Its subcellular location is the cytoplasm. Functionally, exhibits a very high intrinsic GTPase hydrolysis rate. Involved in the addition of a carboxymethylaminomethyl (cmnm) group at the wobble position (U34) of certain tRNAs, forming tRNA-cmnm(5)s(2)U34. This chain is tRNA modification GTPase MnmE, found in Clostridium acetobutylicum (strain ATCC 824 / DSM 792 / JCM 1419 / IAM 19013 / LMG 5710 / NBRC 13948 / NRRL B-527 / VKM B-1787 / 2291 / W).